A 138-amino-acid chain; its full sequence is Small ribosomal subunit protein bS18m (138 aa).

The protein belongs to the bacterial ribosomal protein bS18 family. Component of the mitochondrial small ribosomal subunit. Mature mitochondrial ribosomes consist of a small (37S) and a large (54S) subunit. The 37S subunit contains at least 33 different proteins and 1 molecule of RNA (15S). The 54S subunit contains at least 45 different proteins and 1 molecule of RNA (21S).

Its subcellular location is the mitochondrion. This Saccharomyces cerevisiae (strain RM11-1a) (Baker's yeast) protein is Small ribosomal subunit protein bS18m (RSM18).